Consider the following 301-residue polypeptide: GTPase Era (301 aa).

The 169-residue stretch at 7–175 (YCGFIAIVGR…AAIVRKHLPE (169 aa)) folds into the Era-type G domain. The G1 stretch occupies residues 15–22 (GRPNVGKS). GTP is bound at residue 15–22 (GRPNVGKS). The interval 41–45 (QTTRH) is G2. Residues 62–65 (DTPG) form a G3 region. Residues 62–66 (DTPGL) and 124–127 (NKVD) contribute to the GTP site. The tract at residues 124–127 (NKVD) is G4. The interval 154–156 (ISA) is G5. The 78-residue stretch at 206–283 (LGAELPYSVT…HLELWVKVKS (78 aa)) folds into the KH type-2 domain.

This sequence belongs to the TRAFAC class TrmE-Era-EngA-EngB-Septin-like GTPase superfamily. Era GTPase family. Monomer.

It is found in the cytoplasm. Its subcellular location is the cell inner membrane. Functionally, an essential GTPase that binds both GDP and GTP, with rapid nucleotide exchange. Plays a role in 16S rRNA processing and 30S ribosomal subunit biogenesis and possibly also in cell cycle regulation and energy metabolism. This is GTPase Era from Escherichia coli (strain K12 / DH10B).